A 460-amino-acid polypeptide reads, in one-letter code: Putative type II methyltransferase M.OihORF3336P (460 aa).

One can recognise an SAM-dependent MTase C5-type domain in the interval 15 to 458 (PEVVDLFSGC…EAMKKNIQGG (444 aa)). Residue cysteine 97 is part of the active site.

It belongs to the class I-like SAM-binding methyltransferase superfamily. C5-methyltransferase family.

The catalysed reaction is a 2'-deoxycytidine in DNA + S-adenosyl-L-methionine = a 5-methyl-2'-deoxycytidine in DNA + S-adenosyl-L-homocysteine + H(+). In terms of biological role, a methylase, recognizes the double-stranded sequence 5'-ACCGGT-3', methylates C-? on both strands. No endonuclease has been identified for this methylase. The protein is Putative type II methyltransferase M.OihORF3336P of Oceanobacillus iheyensis (strain DSM 14371 / CIP 107618 / JCM 11309 / KCTC 3954 / HTE831).